The chain runs to 161 residues: uncharacterized protein (161 aa).

This is an uncharacterized protein from Methanocaldococcus jannaschii (strain ATCC 43067 / DSM 2661 / JAL-1 / JCM 10045 / NBRC 100440) (Methanococcus jannaschii).